Consider the following 429-residue polypeptide: MVSHPCTADEAKPPSEGQLARFENGKLIVPDNLIVAYFKGDGIGPEIVESAKKVLDAAVDKAYGGTRRIVWWEVTAGEEAQKECGSLLPDGTLQAFKLARVNLKGPLTTPVGGGFRSLNVTLRMVLDLYSNVRPVKWYGQPTPHCHPENIDWVIFRENTEDVYAGIEWPFDSPEAQKIRDFLKKEFGIELTPDTGIGIKPISKWRTQRHVRRAMEWAIRNGYKHVTIMHKGNIMKYTEGAFRQWAYDLILSEFRDYVVTEEEVNTKYGGKAPEGKIIVNDRIADNMLQQIITRPGEYNVIVTPNLNGDYISDEANALVGGIGMAAGLDMGDGIAVAEPVHGSAPKYAGKNVINPTAEILSGMYLLSDFVGWPEVKLLVEYAVKQAIAHKQVTYDLAREMGGVTPISTTEYTDVLVDYIRHADLKALKGQ.

Thr-108 is an NADP(+) binding site. Positions 117, 119, 123, 133, and 156 each coordinate D-threo-isocitrate. Residue Asp-308 participates in Mg(2+) binding. NADP(+)-binding positions include 340–346, Asn-353, Tyr-393, and Arg-397; that span reads HGSAPKY.

The protein belongs to the isocitrate and isopropylmalate dehydrogenases family. Homodimer. The cofactor is Mg(2+). Mn(2+) is required as a cofactor.

It carries out the reaction D-threo-isocitrate + NADP(+) = 2-oxoglutarate + CO2 + NADPH. Its function is as follows. Catalyzes the oxidative decarboxylation of isocitrate to 2-oxoglutarate and carbon dioxide with the concomitant reduction of NADP(+). The sequence is that of Isocitrate dehydrogenase [NADP] (icd) from Caldococcus noboribetus.